The primary structure comprises 317 residues: Enoyl-CoA delta isomerase 3, peroxisomal (317 aa).

In terms of domain architecture, ACB spans 1 to 46; the sequence is MPKPGVFNFVNKATWDARNALGSLPKETARKNYVDLVSSLSSSSEA. The disordered stretch occupies residues 40–60; sequence LSSSSEAPSQGKRGADEKARE. A substrate-binding site is contributed by 120-124; it reads SGNDL. The Microbody targeting signal motif lies at 315–317; it reads AKL.

Belongs to the enoyl-CoA hydratase/isomerase family. In terms of tissue distribution, expressed at high levels in the kidney. Also detected at very low levels in the duodenum, jejunum, ileum, heart, liver, lung, and brown adipose tissue (at protein level). In the kidney, expression seems to be localized mainly to the proximal tubule.

The protein resides in the peroxisome. The catalysed reaction is a (3Z)-enoyl-CoA = a 4-saturated (2E)-enoyl-CoA. It carries out the reaction a (3E)-enoyl-CoA = a 4-saturated (2E)-enoyl-CoA. It catalyses the reaction (3E)-nonenoyl-CoA = (2E)-nonenoyl-CoA. In terms of biological role, catalyzes the isomerization of trans-3-nonenoyl-CoA into trans-2-nonenoyl-CoA. May also have activity towards other enoyl-CoA species. This is Enoyl-CoA delta isomerase 3, peroxisomal from Mus musculus (Mouse).